The primary structure comprises 239 residues: Small ribosomal subunit protein uS2 (239 aa).

The protein belongs to the universal ribosomal protein uS2 family.

This chain is Small ribosomal subunit protein uS2, found in Prochlorococcus marinus (strain MIT 9303).